The sequence spans 93 residues: Ubiquitin-like protein ATG12 (93 aa).

G93 is covalently cross-linked (Glycyl lysine isopeptide (Gly-Lys) (interchain with K-138 in ATG5)).

It belongs to the ATG12 family.

Its subcellular location is the cytoplasm. In terms of biological role, ubiquitin-like protein involved in cytoplasm to vacuole transport (Cvt) and autophagy vesicles formation. Conjugation with ATG5 through a ubiquitin-like conjugating system is essential for its function. ATG12/ATG5 conjugate has an essential role in plant nutrient recycling. This is Ubiquitin-like protein ATG12 (ATG12) from Oryza sativa subsp. indica (Rice).